The chain runs to 558 residues: Cytochrome P450 monooxygenase grgG (558 aa).

A helical membrane pass occupies residues 11-31 (PASFIYFPLLILVGHALIFIL). Cys-470 serves as a coordination point for heme.

The protein belongs to the cytochrome P450 family. The cofactor is heme.

It is found in the membrane. It functions in the pathway secondary metabolite biosynthesis. Functionally, cytochrome P450 monooxygenase; part of the gene cluster that mediates the biosynthesis of gregatin A, a fungal polyketide featuring an alkylated furanone core. The PKS grgA synthesizes C11 and C4 polyketide chains in the presence and absence of the trans-enoyl reductase grgB, respectively. The polyketide transferase grgF is then responsible for the fusion of the two carbon chains to produce the furanone skeleton of gregatin A. Next, the cytochrome P450 monooxygenase grgG performs the oxidative cyclization to furnish the gregatin scaffold and leads to the formation of desmethylgregatin A. In this transformation, grgG initially abstracts a hydrogen atom from C-8 to generate a substrate radical, from which one electron is transferred to the iron-heme center to yield a carbocationic species. Heterocyclization along with double-bond isomerizations provides desmethylgregatin A with the furanone ring. Alternatively, grgG might provide hydroxylation at the C-8 radical, which is followed by dehydration to give the cyclized desmethylgregatin A. Finally, the O-methyltransferase grgD methylates the carboxyl group of desmethylgregatin A to provide gregatin A. The sequence is that of Cytochrome P450 monooxygenase grgG (grgG) from Penicillium sp.